Here is a 173-residue protein sequence, read N- to C-terminus: Bifunctional protein PyrR (173 aa).

A PRPP-binding motif is present at residues 93-105; it reads IILVDDVLYTGRT.

The protein belongs to the purine/pyrimidine phosphoribosyltransferase family. PyrR subfamily. Homodimer and homohexamer; in equilibrium.

It carries out the reaction UMP + diphosphate = 5-phospho-alpha-D-ribose 1-diphosphate + uracil. Functionally, regulates transcriptional attenuation of the pyrimidine nucleotide (pyr) operon by binding in a uridine-dependent manner to specific sites on pyr mRNA. This disrupts an antiterminator hairpin in the RNA and favors formation of a downstream transcription terminator, leading to a reduced expression of downstream genes. Also displays a weak uracil phosphoribosyltransferase activity which is not physiologically significant. This is Bifunctional protein PyrR from Streptococcus equi subsp. zooepidemicus (strain MGCS10565).